Consider the following 115-residue polypeptide: Selenoprotein K homolog (115 aa).

Residues 29–49 (FIWGILNQITFFFSTLIGGTV) traverse the membrane as a helical segment. Residues 48 to 115 (TVEPRRRPNN…NSASGSUGPK (68 aa)) form a disordered region. Over residues 58-84 (QGGGRRLAGFDGNGNVTGGSGVGGSGP) the composition is skewed to gly residues. The span at 104 to 115 (ACNSASGSUGPK) shows a compositional bias: polar residues. A non-standard amino acid (selenocysteine) is located at residue selenocysteine 112.

This sequence belongs to the selenoprotein K family.

The protein resides in the membrane. The protein is Selenoprotein K homolog (selk) of Dictyostelium discoideum (Social amoeba).